The chain runs to 391 residues: Protein-glutamate methylesterase/protein-glutamine glutaminase of group 2 operon (391 aa).

Positions R20–H138 constitute a Response regulatory domain. D71 is subject to 4-aspartylphosphate. The region spanning P196–V383 is the CheB-type methylesterase domain. Active-site residues include S207, H235, and D331.

This sequence belongs to the CheB family. Post-translationally, phosphorylated by CheA. Phosphorylation of the N-terminal regulatory domain activates the methylesterase activity.

It is found in the cytoplasm. The enzyme catalyses [protein]-L-glutamate 5-O-methyl ester + H2O = L-glutamyl-[protein] + methanol + H(+). The catalysed reaction is L-glutaminyl-[protein] + H2O = L-glutamyl-[protein] + NH4(+). Functionally, involved in chemotaxis. Part of a chemotaxis signal transduction system that modulates chemotaxis in response to various stimuli. Catalyzes the demethylation of specific methylglutamate residues introduced into the chemoreceptors (methyl-accepting chemotaxis proteins or MCP) by CheR. Also mediates the irreversible deamidation of specific glutamine residues to glutamic acid. This is Protein-glutamate methylesterase/protein-glutamine glutaminase of group 2 operon from Rhodopseudomonas palustris (strain ATCC BAA-98 / CGA009).